A 304-amino-acid polypeptide reads, in one-letter code: Protease HtpX homolog (304 aa).

Transmembrane regions (helical) follow at residues 14–34 (VFIILGFFIFVLMVGAAIGII) and 39–59 (YLNGLILAAVIGAFYILIMVM). His144 provides a ligand contact to Zn(2+). Glu145 is an active-site residue. His148 contributes to the Zn(2+) binding site. Transmembrane regions (helical) follow at residues 159–179 (IAIALVAVIAILSDIAMRMIF) and 202–222 (AIIYIVALIFVILAPIIATAI). Glu231 lines the Zn(2+) pocket.

This sequence belongs to the peptidase M48B family. Zn(2+) serves as cofactor.

It localises to the cell membrane. This is Protease HtpX homolog from Listeria monocytogenes serotype 4a (strain HCC23).